Here is a 423-residue protein sequence, read N- to C-terminus: Adenylosuccinate synthetase (423 aa).

Residues 12 to 18 (GDEGKGK) and 40 to 42 (GHT) contribute to the GTP site. Asp-13 (proton acceptor) is an active-site residue. Residues Asp-13 and Gly-40 each coordinate Mg(2+). IMP is bound by residues 13–16 (DEGK), 38–41 (NAGH), Thr-129, Arg-143, Gln-224, Thr-239, and Arg-303. Residue His-41 is the Proton donor of the active site. Substrate is bound at residue 299 to 305 (SVTGRQR). GTP is bound by residues Arg-305, 331-333 (KGD), and 412-414 (SVG).

This sequence belongs to the adenylosuccinate synthetase family. In terms of assembly, homodimer. Mg(2+) serves as cofactor.

It is found in the cytoplasm. It carries out the reaction IMP + L-aspartate + GTP = N(6)-(1,2-dicarboxyethyl)-AMP + GDP + phosphate + 2 H(+). Its pathway is purine metabolism; AMP biosynthesis via de novo pathway; AMP from IMP: step 1/2. Its function is as follows. Plays an important role in the de novo pathway of purine nucleotide biosynthesis. Catalyzes the first committed step in the biosynthesis of AMP from IMP. This is Adenylosuccinate synthetase from Flavobacterium johnsoniae (strain ATCC 17061 / DSM 2064 / JCM 8514 / BCRC 14874 / CCUG 350202 / NBRC 14942 / NCIMB 11054 / UW101) (Cytophaga johnsonae).